A 362-amino-acid polypeptide reads, in one-letter code: uncharacterized protein (362 aa).

7 helical membrane-spanning segments follow: residues 32-52 (GAGW…VGAV), 75-95 (FVDA…ADGV), 106-126 (VVML…DLSV), 148-168 (AAVG…GVGA), 176-196 (GVGT…VVVV), 287-307 (VFAL…PVAM), and 329-349 (VLVA…CGMF).

Belongs to the peptidase S58 family.

The protein resides in the cell membrane. Its function is as follows. Aminopeptidase. This is an uncharacterized protein from Mycobacterium leprae (strain TN).